Reading from the N-terminus, the 383-residue chain is uncharacterized protein (383 aa).

[4Fe-4S] cluster is bound by residues C12, C18, C21, and C88. S-adenosyl-L-methionine is bound by residues Q219, F246, E267, and D314. The active-site Nucleophile is the C341.

This sequence belongs to the class I-like SAM-binding methyltransferase superfamily. RNA M5U methyltransferase family.

This is an uncharacterized protein from Protochlamydia amoebophila (strain UWE25).